We begin with the raw amino-acid sequence, 481 residues long: uncharacterized protein (481 aa).

The next 11 membrane-spanning stretches (helical) occupy residues L14–L34, F46–A66, I90–A110, F134–F154, T167–T187, F218–I238, I258–G278, I303–A323, L377–A397, A411–S431, and Y446–H466.

The protein belongs to the amino acid-polyamine-organocation (APC) superfamily.

The protein localises to the cell membrane. Probable amino-acid or metabolite transport protein. This is an uncharacterized protein from Mycobacterium bovis (strain ATCC BAA-935 / AF2122/97).